A 128-amino-acid chain; its full sequence is Large ribosomal subunit protein bL17 (128 aa).

It belongs to the bacterial ribosomal protein bL17 family. As to quaternary structure, part of the 50S ribosomal subunit. Contacts protein L32.

This is Large ribosomal subunit protein bL17 from Enterobacter sp. (strain 638).